Reading from the N-terminus, the 171-residue chain is MLP-like protein 31 (171 aa).

This sequence belongs to the MLP family.

The polypeptide is MLP-like protein 31 (MLP31) (Arabidopsis thaliana (Mouse-ear cress)).